A 134-amino-acid polypeptide reads, in one-letter code: Putative nickel-responsive regulator (134 aa).

Residues H78, H89, H91, and C97 each coordinate Ni(2+).

It belongs to the transcriptional regulatory CopG/NikR family. Ni(2+) is required as a cofactor.

Transcriptional regulator. This Chlorobium limicola (strain DSM 245 / NBRC 103803 / 6330) protein is Putative nickel-responsive regulator.